The following is a 371-amino-acid chain: DNA replication and repair protein RecF (371 aa).

ATP is bound at residue 30–37 (GQNGSGKT).

Belongs to the RecF family.

Its subcellular location is the cytoplasm. Functionally, the RecF protein is involved in DNA metabolism; it is required for DNA replication and normal SOS inducibility. RecF binds preferentially to single-stranded, linear DNA. It also seems to bind ATP. The protein is DNA replication and repair protein RecF of Chlorobium phaeovibrioides (strain DSM 265 / 1930) (Prosthecochloris vibrioformis (strain DSM 265)).